Here is a 342-residue protein sequence, read N- to C-terminus: Phenylalanine--tRNA ligase alpha subunit (342 aa).

E260 lines the Mg(2+) pocket.

This sequence belongs to the class-II aminoacyl-tRNA synthetase family. Phe-tRNA synthetase alpha subunit type 1 subfamily. In terms of assembly, tetramer of two alpha and two beta subunits. Mg(2+) is required as a cofactor.

The protein localises to the cytoplasm. The catalysed reaction is tRNA(Phe) + L-phenylalanine + ATP = L-phenylalanyl-tRNA(Phe) + AMP + diphosphate + H(+). The sequence is that of Phenylalanine--tRNA ligase alpha subunit from Nocardia farcinica (strain IFM 10152).